We begin with the raw amino-acid sequence, 161 residues long: Cuticle protein 16.8 (161 aa).

At glutamine 1 the chain carries Pyrrolidone carboxylic acid. Residues 1–10 are compositionally biased toward pro residues; that stretch reads QSEPAGPPQP. 2 disordered regions span residues 1–44 and 67–103; these read QSEP…YSYT and ETNE…PAKP. The Chitin-binding type R&amp;R domain occupies 8 to 74; that stretch reads PQPYTFSYDN…TVETNEPGTK (67 aa). The segment covering 67-86 has biased composition (polar residues); sequence ETNEPGTKTSNPADAQIVSN. The span at 87–103 shows a compositional bias: low complexity; it reads AATDSYSPSPASSPAKP.

Functionally, component of the cuticle of the tick. Binds chitin. The protein is Cuticle protein 16.8 of Ixodes ricinus (Common tick).